Reading from the N-terminus, the 423-residue chain is Histidine--tRNA ligase 2 (423 aa).

The protein belongs to the class-II aminoacyl-tRNA synthetase family. As to quaternary structure, homodimer.

It localises to the cytoplasm. The catalysed reaction is tRNA(His) + L-histidine + ATP = L-histidyl-tRNA(His) + AMP + diphosphate + H(+). The protein is Histidine--tRNA ligase 2 of Bacillus anthracis.